We begin with the raw amino-acid sequence, 253 residues long: Protein phosphatase CheZ (253 aa).

Residues 1–84 (MTQEELDALM…EWPPPPPTEE (84 aa)) are disordered. A compositionally biased stretch (basic and acidic residues) spans 21–69 (LETKEETKEEAKEEAKEEAKEEAKEKEEIKEESSSQKMTVKKEDAEKYG).

It belongs to the CheZ family. As to quaternary structure, interacts with ChePep; this interaction is essential for each other polar localization.

It is found in the cytoplasm. Functionally, plays an important role in bacterial chemotaxis signal transduction pathway by accelerating the dephosphorylation of phosphorylated CheY (CheY-P). Also dephosphorylates CheV2 but not CheV1 or CheV3. In addition, forms a distinct chemotaxis regulatory complex with ChePep independently of the core chemotaxis signaling proteins. The sequence is that of Protein phosphatase CheZ from Helicobacter pylori (strain ATCC 700392 / 26695) (Campylobacter pylori).